A 186-amino-acid chain; its full sequence is MKAGPIELGEGKSSAPKAAVNRGVAILDFILRILAFIGTLGSAISMATTNETLPFFTQFIRFRAEYDDLPTFTFFVVANGVVSAYLLFSLPFSIFNIVRSKAQNSRILLIILDTAMLGLLSAGASAAAAIVYLAHQGNVRTNWSAICQQFNSFCERISGSLIGSFIGVVVFILLISLSAVALSRHK.

The Cytoplasmic segment spans residues 1 to 23; it reads MKAGPIELGEGKSSAPKAAVNRG. A helical transmembrane segment spans residues 24–44; that stretch reads VAILDFILRILAFIGTLGSAI. The Extracellular portion of the chain corresponds to 45-73; the sequence is SMATTNETLPFFTQFIRFRAEYDDLPTFT. An N-linked (GlcNAc...) asparagine glycan is attached at asparagine 50. A helical transmembrane segment spans residues 74-94; it reads FFVVANGVVSAYLLFSLPFSI. At 95 to 106 the chain is on the cytoplasmic side; that stretch reads FNIVRSKAQNSR. Residues 107 to 127 traverse the membrane as a helical segment; that stretch reads ILLIILDTAMLGLLSAGASAA. Residues 128-160 are Extracellular-facing; the sequence is AAIVYLAHQGNVRTNWSAICQQFNSFCERISGS. The N-linked (GlcNAc...) asparagine glycan is linked to asparagine 142. Residues 161 to 181 form a helical membrane-spanning segment; sequence LIGSFIGVVVFILLISLSAVA. Topologically, residues 182 to 186 are cytoplasmic; the sequence is LSRHK.

Belongs to the Casparian strip membrane proteins (CASP) family. In terms of assembly, homodimer and heterodimers.

It localises to the cell membrane. Its function is as follows. Regulates membrane-cell wall junctions and localized cell wall deposition. Required for establishment of the Casparian strip membrane domain (CSD) and the subsequent formation of Casparian strips, a cell wall modification of the root endodermis that determines an apoplastic barrier between the intraorganismal apoplasm and the extraorganismal apoplasm and prevents lateral diffusion. The protein is Casparian strip membrane protein 6 of Populus trichocarpa (Western balsam poplar).